Reading from the N-terminus, the 296-residue chain is Glycine--tRNA ligase alpha subunit (296 aa).

This sequence belongs to the class-II aminoacyl-tRNA synthetase family. In terms of assembly, tetramer of two alpha and two beta subunits.

The protein resides in the cytoplasm. The enzyme catalyses tRNA(Gly) + glycine + ATP = glycyl-tRNA(Gly) + AMP + diphosphate. In Desulfitobacterium hafniense (strain Y51), this protein is Glycine--tRNA ligase alpha subunit.